A 198-amino-acid polypeptide reads, in one-letter code: Probable septum site-determining protein MinC (198 aa).

This sequence belongs to the MinC family. Interacts with MinD and FtsZ.

In terms of biological role, cell division inhibitor that blocks the formation of polar Z ring septums. Rapidly oscillates between the poles of the cell to destabilize FtsZ filaments that have formed before they mature into polar Z rings. Prevents FtsZ polymerization. This Thermosipho melanesiensis (strain DSM 12029 / CIP 104789 / BI429) protein is Probable septum site-determining protein MinC.